The sequence spans 446 residues: Zinc finger protein BALDIBIS (446 aa).

The interval 20 to 53 is disordered; the sequence is EHIAPNPNPNPNPTSSNSAKRKRNLPGNPDPDAE. S58 carries the phosphoserine modification. C2H2-type zinc fingers lie at residues 68–90 and 110–140; these read FICE…RRGH and YICP…SRKH. The short motif at 132 to 139 is the Nuclear localization signal element; the sequence is IKKHFSRK. The C2H2-type 2; degenerate zinc-finger motif lies at 145–168; that stretch reads WKCDKCSKKYAVMSDWKAHSKICG. Residues C147, C150, H163, C167, C174, C176, H189, and C193 each coordinate Zn(2+). The CCHC-type 2; atypical zinc-finger motif lies at 172–195; the sequence is YRCDCGTLFSRKDSFITHRAFCDA. The interval 182–194 is SHR-binding; it reads RKDSFITHRAFCD. The disordered stretch occupies residues 425 to 446; the sequence is HNLPDSSPPASTDGTPTADMNQ. A compositionally biased stretch (polar residues) spans 427–446; sequence LPDSSPPASTDGTPTADMNQ.

Binds to RGA and SCL3 competitively in the nucleus. In terms of tissue distribution, expressed in roots, especially in vascular initials, cortex, endodermis, and quiescent center (QC).

It is found in the nucleus. Functionally, transcription factor that, together with JKD, regulates tissue boundaries and asymmetric cell division in roots by a rapid up-regulation of 'SCARECROW' (SCR), thus controlling the nuclear localization of 'SHORT-ROOT' (SHR) and restricting its action. Confines CYCD6 expression to the cortex-endodermis initial/daughter (CEI/CEID) tissues. Binds DNA via its zinc fingers. Recognizes and binds to SCL3 promoter sequence 5'-AGACAA-3' to promote its expression when in complex with RGA. The chain is Zinc finger protein BALDIBIS from Arabidopsis thaliana (Mouse-ear cress).